The sequence spans 128 residues: Large ribosomal subunit protein bL20 (128 aa).

Belongs to the bacterial ribosomal protein bL20 family.

Its function is as follows. Binds directly to 23S ribosomal RNA and is necessary for the in vitro assembly process of the 50S ribosomal subunit. It is not involved in the protein synthesizing functions of that subunit. The protein is Large ribosomal subunit protein bL20 of Anaplasma phagocytophilum (strain HZ).